Here is a 703-residue protein sequence, read N- to C-terminus: MTAKPQKSCQFKRDYPQLINLYPPCALTTAQSLDNLTRLRLSRLTTQSTQPIQGLCVMGQWGLGDGLELLSLLQHWQTQTQTQTQPQGNTRLLVKVFEPNPINDYELKLLWDQSQSLISKSHLQPIANAILKAKPARIIGCQRLIFDDGRITVDLHFGDLHSALSQLPHSPAHLIQQWLVLPHLAAQLNGKQVWQMARLSTDDAQLIGVNLAETVRQLAHQSGFSTLNVSQDTSNGDASDALQSQIITDEILLHERKLLRQQADTAQAFTPKPAALVAKDHPVAIVGGGLASANLMLSLAERGQSSTLFCKDNELGQGASGNRQGAIYPLLTPENDELSRFFQQAFLFSRRRIEALSHASMMETETAKNVTAISHDFCGVLQTGHDERSQQRLDKIIQSQDWPAEIAYAVDANEANEIAQIGIDKAGFFYPLGGWVCPFEYAKAAVDKASQLANVQCHFNTEITEIECDANAWYLHSQGQRFGPFRQLVLANGAQLTQFSACERLQISPFRGQVSHVPAQFKLSQLATVLCANGYLTPSHQGLHCLGASYVKAAEHFDFCPQEQRENLGKMQESYPNQAWVDDIDISGNSARVGVRMVTRDHFPMMGCAPDVAEILARYELHQLNQQQAEQSKHYWQTTPAPILDGLYILGGLGSRGLSSGPLAAECLAAQLTGEPLPLDWPTLNKLNPNRMWLRKLLKGKAL.

Residues 1–281 (MTAKPQKSCQ…KPAALVAKDH (281 aa)) form a tRNA (mnm(5)s(2)U34)-methyltransferase region. The interval 286–703 (VGGGLASANL…LRKLLKGKAL (418 aa)) is FAD-dependent cmnm(5)s(2)U34 oxidoreductase.

It in the N-terminal section; belongs to the methyltransferase superfamily. tRNA (mnm(5)s(2)U34)-methyltransferase family. This sequence in the C-terminal section; belongs to the DAO family. Requires FAD as cofactor.

It is found in the cytoplasm. The catalysed reaction is 5-aminomethyl-2-thiouridine(34) in tRNA + S-adenosyl-L-methionine = 5-methylaminomethyl-2-thiouridine(34) in tRNA + S-adenosyl-L-homocysteine + H(+). Catalyzes the last two steps in the biosynthesis of 5-methylaminomethyl-2-thiouridine (mnm(5)s(2)U) at the wobble position (U34) in tRNA. Catalyzes the FAD-dependent demodification of cmnm(5)s(2)U34 to nm(5)s(2)U34, followed by the transfer of a methyl group from S-adenosyl-L-methionine to nm(5)s(2)U34, to form mnm(5)s(2)U34. In Shewanella sp. (strain MR-7), this protein is tRNA 5-methylaminomethyl-2-thiouridine biosynthesis bifunctional protein MnmC.